The primary structure comprises 201 residues: Small ribosomal subunit protein uS4 (201 aa).

In terms of domain architecture, S4 RNA-binding spans 93-156 (RRLDNMVYRL…KNLDIIKNAV (64 aa)).

The protein belongs to the universal ribosomal protein uS4 family. Part of the 30S ribosomal subunit. Contacts protein S5. The interaction surface between S4 and S5 is involved in control of translational fidelity.

In terms of biological role, one of the primary rRNA binding proteins, it binds directly to 16S rRNA where it nucleates assembly of the body of the 30S subunit. Functionally, with S5 and S12 plays an important role in translational accuracy. This chain is Small ribosomal subunit protein uS4, found in Limosilactobacillus reuteri subsp. reuteri (strain JCM 1112) (Lactobacillus reuteri).